Consider the following 117-residue polypeptide: DNA-directed RNA polymerase subunit omega (117 aa).

This sequence belongs to the RNA polymerase subunit omega family. In terms of assembly, the RNAP catalytic core consists of 2 alpha, 1 beta, 1 beta' and 1 omega subunit. When a sigma factor is associated with the core the holoenzyme is formed, which can initiate transcription.

It catalyses the reaction RNA(n) + a ribonucleoside 5'-triphosphate = RNA(n+1) + diphosphate. Functionally, promotes RNA polymerase assembly. Latches the N- and C-terminal regions of the beta' subunit thereby facilitating its interaction with the beta and alpha subunits. The sequence is that of DNA-directed RNA polymerase subunit omega from Cereibacter sphaeroides (strain ATCC 17025 / ATH 2.4.3) (Rhodobacter sphaeroides).